Consider the following 318-residue polypeptide: CRISPR-associated protein Cas7/Csa2 1 (318 aa).

The protein belongs to the CRISPR-associated protein Cas7/Cst2/DevR family. Subtype I-a/Apern subfamily. Part of the aCascade ribonucleoprotein complex, minimally composed of Csa2 and Cas5a, which binds crRNA. Other possible components of aCascade in strain P1 are Cas6b (SSO1437) and Csa5 (SSO1443), while SSO1399, Cas5b (SSO1400) and SSO1401 have sometimes been seen weakly associated. Csa2 is probably the major RNA-binding subunit. The Csa2-Cas5a-crRNA complex also binds target DNA homologous to crRNA, probably forming an R-loop. Purified aCascade forms a filament about 6 nm in width.

CRISPR (clustered regularly interspaced short palindromic repeat) is an adaptive immune system that provides protection against mobile genetic elements (viruses, transposable elements and conjugative plasmids). CRISPR clusters contain spacers, sequences complementary to antecedent mobile elements, and target invading nucleic acids. CRISPR clusters are transcribed and processed into CRISPR RNA (crRNA). This is CRISPR-associated protein Cas7/Csa2 1 (cas7a) from Saccharolobus solfataricus (strain ATCC 35092 / DSM 1617 / JCM 11322 / P2) (Sulfolobus solfataricus).